A 540-amino-acid chain; its full sequence is MENLCDKCSSVIYSKEYHQCLANSTTRNFIVCNSTTINYDSLTMKQLCELANGGNKQVQKIILDRIQFFSYGSVPHRYIEFKKWEYFMDKIPHNQNYVRLYLCWIYYNCMEIDGSIIAHIKNLAKMCNIDAQTNYGLVNEYGIGVKKNIKKAIKWYKLSCYKENLFGLLFLGSLYERGYGVSCDKHMAFNLYEKATKHNYPAVKRQLAFMYRTGSGTTKNINKSHELYREAANQGYPLAQYALALQCKYGHGCIKNYKEAETWLIRSYNNGCLYATYSLARLYIETKSPLRNYSRAFELMQEAASENYLLAINYLAKIYKNGIGVNKNISRAIYWYYKAGNSTKITELLEINNSVIINTLDCNIFTCLDSIENEILFDIQLYILKYKYGDKCDYNLQLYQQLETIVFECIKLRNALDKSSALTTCLKPITKEYRDELSKFTIDTDVFVKHYYFNKQTYMTFGKANVKLSDDIIFFLSKKPYINIVNKLICLNKTNIDTVKDIKSINSKLQKYANLFVRYIEETVNIRNTMFQIKFSFIFR.

Sel1-like repeat units follow at residues 129-164 (IDAQ…YKEN), 165-200 (LFGL…KHNY), 201-236 (PAVK…NQGY), 237-272 (PLAQ…NNGC), 273-308 (LYAT…SENY), and 309-344 (LLAI…NSTK).

The chain is Putative sel1-like repeat-containing protein R815 from Acanthamoeba polyphaga (Amoeba).